A 68-amino-acid chain; its full sequence is MDARLLEILVCPVCKGPLHYDRGAQELVCNADKLAYPIRDGIPVMLVDEARQTVEGTPVDPAGPAQGR.

The protein belongs to the UPF0434 family.

This chain is UPF0434 protein BTH_I0741, found in Burkholderia thailandensis (strain ATCC 700388 / DSM 13276 / CCUG 48851 / CIP 106301 / E264).